We begin with the raw amino-acid sequence, 445 residues long: Putative diacyglycerol O-acyltransferase Rv2285 (445 aa).

His135 functions as the Proton acceptor in the catalytic mechanism.

Belongs to the long-chain O-acyltransferase family.

It catalyses the reaction an acyl-CoA + a 1,2-diacyl-sn-glycerol = a triacyl-sn-glycerol + CoA. It carries out the reaction di-(9Z)-octadecenoylglycerol + (9Z)-octadecenoyl-CoA = 1,2,3-tri-(9Z-octadecenoyl)-glycerol + CoA. The protein operates within glycerolipid metabolism; triacylglycerol biosynthesis. Catalyzes the terminal and only committed step in triacylglycerol synthesis by using diacylglycerol and fatty acyl CoA as substrates. Required for storage lipid synthesis. In terms of biological role, upon expression in E.coli functions weakly as a triacylglycerol synthase, making triacylglycerol (TG) from diolein and long-chain fatty acyl-CoA. Has very weak wax synthase activity, incorporating palmityl alcohol into wax esters in the presence of palmitoyl-CoA. The chain is Putative diacyglycerol O-acyltransferase Rv2285 from Mycobacterium tuberculosis (strain ATCC 25618 / H37Rv).